The chain runs to 132 residues: uncharacterized protein (132 aa).

The protein belongs to the mycobacterial PPE family.

This is an uncharacterized protein from Mycobacterium tuberculosis (strain ATCC 25618 / H37Rv).